The following is a 298-amino-acid chain: Bifunctional protein FolD (298 aa).

Residues 166 to 168 (GRS), Ser191, and Ile232 contribute to the NADP(+) site.

The protein belongs to the tetrahydrofolate dehydrogenase/cyclohydrolase family. In terms of assembly, homodimer.

The enzyme catalyses (6R)-5,10-methylene-5,6,7,8-tetrahydrofolate + NADP(+) = (6R)-5,10-methenyltetrahydrofolate + NADPH. It catalyses the reaction (6R)-5,10-methenyltetrahydrofolate + H2O = (6R)-10-formyltetrahydrofolate + H(+). Its pathway is one-carbon metabolism; tetrahydrofolate interconversion. Functionally, catalyzes the oxidation of 5,10-methylenetetrahydrofolate to 5,10-methenyltetrahydrofolate and then the hydrolysis of 5,10-methenyltetrahydrofolate to 10-formyltetrahydrofolate. This Erythrobacter litoralis (strain HTCC2594) protein is Bifunctional protein FolD.